We begin with the raw amino-acid sequence, 200 residues long: Large ribosomal subunit protein bL25 (200 aa).

The protein belongs to the bacterial ribosomal protein bL25 family. CTC subfamily. In terms of assembly, part of the 50S ribosomal subunit; part of the 5S rRNA/L5/L18/L25 subcomplex. Contacts the 5S rRNA. Binds to the 5S rRNA independently of L5 and L18.

Its function is as follows. This is one of the proteins that binds to the 5S RNA in the ribosome where it forms part of the central protuberance. This is Large ribosomal subunit protein bL25 from Nocardia farcinica (strain IFM 10152).